The following is a 572-amino-acid chain: Methionine--tRNA ligase (572 aa).

The 'HIGH' region signature appears at 11 to 21; that stretch reads PYINGIKHLGN. Positions 143, 146, 156, and 159 each coordinate Zn(2+). The 'KMSKS' region signature appears at 346–350; sequence QFSTS. An ATP-binding site is contributed by Thr349.

Belongs to the class-I aminoacyl-tRNA synthetase family. MetG type 1 subfamily. Monomer. Zn(2+) serves as cofactor.

It localises to the cytoplasm. The catalysed reaction is tRNA(Met) + L-methionine + ATP = L-methionyl-tRNA(Met) + AMP + diphosphate. Functionally, is required not only for elongation of protein synthesis but also for the initiation of all mRNA translation through initiator tRNA(fMet) aminoacylation. This is Methionine--tRNA ligase from Cereibacter sphaeroides (strain ATCC 17025 / ATH 2.4.3) (Rhodobacter sphaeroides).